The chain runs to 321 residues: MFFDREEEIERLLEDISYEPNMVTFVYGPINSGKTTLIQEFLKRTSEKYVGFYINFRKTPVANYEEFSRVLFSFDSRIKMIKDVISILGKVNPWIPIPREVLNDILRDKEPINAFSYLREVLEEIRSSGKMPILVFDELQVIKDLKVNGSLIYQLFNFLIHLSKEAHLAHVFAVTSDSLFISEIFGNAKLSGRASYFPVYDLPEEKAIEFLLRLNLSEEESRLVVEYFGGKPSYLVEAPKHRKHLREWCERELTLRAREIRRFKSNLLLEFMDEEEVEVEELSEEAINLVNANILFYDPLRGTLRPQGKLELLAIRKVIKG.

28 to 35 (GPINSGKT) is an ATP binding site.

It belongs to the archaeal ATPase family.

This is an uncharacterized protein from Pyrococcus horikoshii (strain ATCC 700860 / DSM 12428 / JCM 9974 / NBRC 100139 / OT-3).